A 450-amino-acid chain; its full sequence is Protein phosphatase 1F (450 aa).

The PPM-type phosphatase domain maps to 152–409 (LVSIHAIRNT…DNITVMVVFL (258 aa)). Mn(2+)-binding residues include Asp194, Gly195, Asp356, and Asp400. A disordered region spans residues 420 to 450 (GQGAGGAQADVGSQDLSTGLSELEINTSQRS). The segment covering 433-450 (QDLSTGLSELEINTSQRS) has biased composition (polar residues). The residue at position 450 (Ser450) is a Phosphoserine.

The protein belongs to the PP2C family. As to quaternary structure, associates with FEM1B. Mg(2+) is required as a cofactor. Mn(2+) serves as cofactor.

The catalysed reaction is O-phospho-L-seryl-[protein] + H2O = L-seryl-[protein] + phosphate. It carries out the reaction O-phospho-L-threonyl-[protein] + H2O = L-threonyl-[protein] + phosphate. Functionally, dephosphorylates and concomitantly deactivates CaM-kinase II activated upon autophosphorylation, and CaM-kinases IV and I activated upon phosphorylation by CaM-kinase kinase. Promotes apoptosis. The sequence is that of Protein phosphatase 1F (Ppm1f) from Rattus norvegicus (Rat).